A 165-amino-acid polypeptide reads, in one-letter code: PTS system glucose-specific EIIA component (165 aa).

Residues 34-138 (DPVFAQKMMG…SSITPIIISN (105 aa)) form the PTS EIIA type-1 domain. Zn(2+) is bound by residues H71 and H86. The active-site Tele-phosphohistidine intermediate; for EIIA activity is H86. The residue at position 86 (H86) is a Phosphohistidine; by HPr.

Heterodimer with glycerol kinase (glpk). It depends on Zn(2+) as a cofactor.

It localises to the cytoplasm. In terms of biological role, the phosphoenolpyruvate-dependent sugar phosphotransferase system (sugar PTS), a major carbohydrate active transport system, catalyzes the phosphorylation of incoming sugar substrates concomitantly with their translocation across the cell membrane. The enzyme II complex composed of PtsG and Crr is involved in glucose transport. The chain is PTS system glucose-specific EIIA component (crr) from Oceanobacillus iheyensis (strain DSM 14371 / CIP 107618 / JCM 11309 / KCTC 3954 / HTE831).